We begin with the raw amino-acid sequence, 318 residues long: MFMINLLLTIVPILLAVAFLTLVERKVLGYMQLRKGPNVVGPYGLLQPIADAVKLFTKEPLRPLTSSITMFIIAPILALTLALTMWTPLPMPHPLINMNLGVLFMLAMSSLAVYSILWSGWASNSKYALIGALRAVAQTISYEVTLAIILLSVLLLSGSFALPALITTQEHMWLIIPSWPLAMMWFISTLAETNRAPFDLTEGESELVSGFNVEYAGGPFALFFLAEYANIIMMNIFTTILFLGAFHNPLMPELYTINFALKATLLTISFLWVRASYPRFRYDQLMHLLWKNFLPLTLALCMWHVTMPIITAGIPPQT.

8 consecutive transmembrane segments (helical) span residues 2–22, 68–88, 100–120, 146–166, 171–191, 222–242, 253–273, and 294–314; these read FMINLLLTIVPILLAVAFLTL, ITMFIIAPILALTLALTMWTP, LGVLFMLAMSSLAVYSILWSG, LAIILLSVLLLSGSFALPALI, HMWLIIPSWPLAMMWFISTLA, LFFLAEYANIIMMNIFTTILF, ELYTINFALKATLLTISFLWV, and LPLTLALCMWHVTMPIITAGI.

The protein belongs to the complex I subunit 1 family.

The protein resides in the mitochondrion inner membrane. The catalysed reaction is a ubiquinone + NADH + 5 H(+)(in) = a ubiquinol + NAD(+) + 4 H(+)(out). Core subunit of the mitochondrial membrane respiratory chain NADH dehydrogenase (Complex I) that is believed to belong to the minimal assembly required for catalysis. Complex I functions in the transfer of electrons from NADH to the respiratory chain. The immediate electron acceptor for the enzyme is believed to be ubiquinone. This chain is NADH-ubiquinone oxidoreductase chain 1 (MT-ND1), found in Coelops frithii (East Asian tailless leaf-nosed bat).